Reading from the N-terminus, the 124-residue chain is Small ribosomal subunit protein eS25 (124 aa).

Positions 1-22 (MPPKDSKQKKDAGKSKKDKDPV) are enriched in basic and acidic residues. The segment at 1-37 (MPPKDSKQKKDAGKSKKDKDPVNKSGGKAKKKKWSKG) is disordered. Basic residues predominate over residues 27–37 (GKAKKKKWSKG).

Belongs to the eukaryotic ribosomal protein eS25 family. As to quaternary structure, component of the small ribosomal subunit.

The protein localises to the cytoplasm. Functionally, component of the small ribosomal subunit. The ribosome is a large ribonucleoprotein complex responsible for the synthesis of proteins in the cell. In Danio rerio (Zebrafish), this protein is Small ribosomal subunit protein eS25 (rps25).